The sequence spans 354 residues: tRNase Z TRZ2, chloroplastic (354 aa).

Residues 1-21 form a disordered region; the sequence is MQLSSSFPISPPKIFPSTKHH. Residues 1–68 constitute a chloroplast transit peptide; it reads MQLSSSFPIS…EEEEEYRKAR (68 aa).

Belongs to the RNase Z family. Homodimer. It depends on Zn(2+) as a cofactor. The cofactor is Ca(2+). Mn(2+) serves as cofactor. Requires Mg(2+) as cofactor. Highly expressed in green and actively dividing tissues.

The protein localises to the plastid. It is found in the chloroplast. It catalyses the reaction Endonucleolytic cleavage of RNA, removing extra 3' nucleotides from tRNA precursor, generating 3' termini of tRNAs. A 3'-hydroxy group is left at the tRNA terminus and a 5'-phosphoryl group is left at the trailer molecule.. In terms of biological role, zinc phosphodiesterase, which displays tRNA 3'-processing endonuclease activity. Involved in tRNA maturation, by removing a 3'-trailer from precursor tRNA. This is tRNase Z TRZ2, chloroplastic from Arabidopsis thaliana (Mouse-ear cress).